The chain runs to 272 residues: NH(3)-dependent NAD(+) synthetase (272 aa).

45-52 (GISGGQDS) is a binding site for ATP. Asp51 provides a ligand contact to Mg(2+). Residue Arg138 coordinates deamido-NAD(+). Thr158 serves as a coordination point for ATP. Glu163 is a binding site for Mg(2+). Residues Lys171 and Asp178 each coordinate deamido-NAD(+). 2 residues coordinate ATP: Lys187 and Thr209. 258-259 (HK) contacts deamido-NAD(+).

It belongs to the NAD synthetase family. As to quaternary structure, homodimer.

The enzyme catalyses deamido-NAD(+) + NH4(+) + ATP = AMP + diphosphate + NAD(+) + H(+). The protein operates within cofactor biosynthesis; NAD(+) biosynthesis; NAD(+) from deamido-NAD(+) (ammonia route): step 1/1. Functionally, catalyzes the ATP-dependent amidation of deamido-NAD to form NAD. Uses ammonia as a nitrogen source. The sequence is that of NH(3)-dependent NAD(+) synthetase from Bacillus licheniformis (strain ATCC 14580 / DSM 13 / JCM 2505 / CCUG 7422 / NBRC 12200 / NCIMB 9375 / NCTC 10341 / NRRL NRS-1264 / Gibson 46).